The following is a 157-amino-acid chain: MKELKVSKINNGTVIDHLPPGRALKVLRLLGIDGSEGFMVLIAMNVYSKKLGGRKDIVKIENVYLSDEQTKALALIAPTATINIIRNGEVVEKRGVTLPDVVEGILTCPNSSCISRSKREPIKSKFLVVSKRPLKLKCHYCGEIIEEKEVSNYINLR.

Residues Cys108, Cys113, Cys138, and Cys141 each coordinate Zn(2+).

This sequence belongs to the PyrI family. Contains catalytic and regulatory chains. Zn(2+) serves as cofactor.

Its function is as follows. Involved in allosteric regulation of aspartate carbamoyltransferase. The sequence is that of Aspartate carbamoyltransferase regulatory chain from Ignicoccus hospitalis (strain KIN4/I / DSM 18386 / JCM 14125).